The sequence spans 284 residues: 4-hydroxybenzoate octaprenyltransferase (284 aa).

Helical transmembrane passes span 13–32, 90–110, 112–132, 134–154, 164–184, 200–220, and 224–244; these read FNRPIGSFLLMWPTLWALWL, ALMLFCALSILSFILVLFTDL, TILLSFVGLGLAALYPFMKRY, HLPQLFLGLAFSWAIPMAYSA, LWMLFVANCFWTIAYDTYYAM, ILFGQYDLFVIICLQGLTLSL, and IGLLAGLHWLYFVSLIVCVGL.

It belongs to the UbiA prenyltransferase family. The cofactor is Mg(2+).

It is found in the cell inner membrane. The enzyme catalyses all-trans-octaprenyl diphosphate + 4-hydroxybenzoate = 4-hydroxy-3-(all-trans-octaprenyl)benzoate + diphosphate. The protein operates within cofactor biosynthesis; ubiquinone biosynthesis. Its function is as follows. Catalyzes the prenylation of para-hydroxybenzoate (PHB) with an all-trans polyprenyl group. Mediates the second step in the final reaction sequence of ubiquinone-8 (UQ-8) biosynthesis, which is the condensation of the polyisoprenoid side chain with PHB, generating the first membrane-bound Q intermediate 3-octaprenyl-4-hydroxybenzoate. This is 4-hydroxybenzoate octaprenyltransferase from Marinomonas sp. (strain MWYL1).